The following is a 397-amino-acid chain: Ribosomal RNA large subunit methyltransferase I (397 aa).

Residues 2 to 78 (TPAIYLVKGR…EQEPIDRDFF (77 aa)) form the PUA domain.

The protein belongs to the methyltransferase superfamily. RlmI family.

It is found in the cytoplasm. The catalysed reaction is cytidine(1962) in 23S rRNA + S-adenosyl-L-methionine = 5-methylcytidine(1962) in 23S rRNA + S-adenosyl-L-homocysteine + H(+). Specifically methylates the cytosine at position 1962 (m5C1962) of 23S rRNA. This is Ribosomal RNA large subunit methyltransferase I from Vibrio cholerae serotype O1 (strain ATCC 39541 / Classical Ogawa 395 / O395).